A 145-amino-acid chain; its full sequence is D-aminoacyl-tRNA deacylase (145 aa).

The Gly-cisPro motif, important for rejection of L-amino acids signature appears at 137 to 138; it reads GP.

This sequence belongs to the DTD family. In terms of assembly, homodimer.

Its subcellular location is the cytoplasm. The catalysed reaction is glycyl-tRNA(Ala) + H2O = tRNA(Ala) + glycine + H(+). It carries out the reaction a D-aminoacyl-tRNA + H2O = a tRNA + a D-alpha-amino acid + H(+). Its function is as follows. An aminoacyl-tRNA editing enzyme that deacylates mischarged D-aminoacyl-tRNAs. Also deacylates mischarged glycyl-tRNA(Ala), protecting cells against glycine mischarging by AlaRS. Acts via tRNA-based rather than protein-based catalysis; rejects L-amino acids rather than detecting D-amino acids in the active site. By recycling D-aminoacyl-tRNA to D-amino acids and free tRNA molecules, this enzyme counteracts the toxicity associated with the formation of D-aminoacyl-tRNA entities in vivo and helps enforce protein L-homochirality. This Pseudomonas aeruginosa (strain LESB58) protein is D-aminoacyl-tRNA deacylase.